The sequence spans 338 residues: tRNA N6-adenosine threonylcarbamoyltransferase (338 aa).

2 residues coordinate Fe cation: H111 and H115. Substrate is bound by residues 134 to 138, D167, G180, and N272; that span reads LVSGG. A Fe cation-binding site is contributed by D300.

This sequence belongs to the KAE1 / TsaD family. Requires Fe(2+) as cofactor.

It localises to the cytoplasm. The enzyme catalyses L-threonylcarbamoyladenylate + adenosine(37) in tRNA = N(6)-L-threonylcarbamoyladenosine(37) in tRNA + AMP + H(+). Functionally, required for the formation of a threonylcarbamoyl group on adenosine at position 37 (t(6)A37) in tRNAs that read codons beginning with adenine. Is involved in the transfer of the threonylcarbamoyl moiety of threonylcarbamoyl-AMP (TC-AMP) to the N6 group of A37, together with TsaE and TsaB. TsaD likely plays a direct catalytic role in this reaction. This is tRNA N6-adenosine threonylcarbamoyltransferase from Shewanella oneidensis (strain ATCC 700550 / JCM 31522 / CIP 106686 / LMG 19005 / NCIMB 14063 / MR-1).